Consider the following 144-residue polypeptide: 3-hydroxyacyl-[acyl-carrier-protein] dehydratase FabZ (144 aa).

His48 is a catalytic residue.

This sequence belongs to the thioester dehydratase family. FabZ subfamily.

The protein localises to the cytoplasm. The enzyme catalyses a (3R)-hydroxyacyl-[ACP] = a (2E)-enoyl-[ACP] + H2O. Involved in unsaturated fatty acids biosynthesis. Catalyzes the dehydration of short chain beta-hydroxyacyl-ACPs and long chain saturated and unsaturated beta-hydroxyacyl-ACPs. This chain is 3-hydroxyacyl-[acyl-carrier-protein] dehydratase FabZ, found in Listeria welshimeri serovar 6b (strain ATCC 35897 / DSM 20650 / CCUG 15529 / CIP 8149 / NCTC 11857 / SLCC 5334 / V8).